The sequence spans 152 residues: Small ribosomal subunit protein bS6 (152 aa).

A disordered region spans residues 94–152 (VKQEGPLPTPKPSNKSSTQSENKDNPETKVESKEEQSVTNSDTSTTKKDDNEIKENTES). Composition is skewed to basic and acidic residues over residues 114–129 (ENKD…KEEQ) and 138–152 (TTKK…NTES).

This sequence belongs to the bacterial ribosomal protein bS6 family.

Its function is as follows. Binds together with bS18 to 16S ribosomal RNA. This Prochlorococcus marinus (strain MIT 9312) protein is Small ribosomal subunit protein bS6.